The chain runs to 491 residues: Ketol-acid reductoisomerase (NADP(+)) (491 aa).

One can recognise a KARI N-terminal Rossmann domain in the interval 16 to 207; it reads IKKCRFMKEN…GGHRAGVLES (192 aa). NADP(+) contacts are provided by residues 44–47, K67, S77, and 107–109; these read CGSQ and DKQ. The active site involves H131. G157 is an NADP(+) binding site. 2 consecutive KARI C-terminal knotted domains span residues 208–344 and 345–484; these read SFIA…NILS and YSEK…MKEM. Residues D216, E220, E389, and E393 each coordinate Mg(2+). A substrate-binding site is contributed by S414.

The protein belongs to the ketol-acid reductoisomerase family. Requires Mg(2+) as cofactor.

The catalysed reaction is (2R)-2,3-dihydroxy-3-methylbutanoate + NADP(+) = (2S)-2-acetolactate + NADPH + H(+). The enzyme catalyses (2R,3R)-2,3-dihydroxy-3-methylpentanoate + NADP(+) = (S)-2-ethyl-2-hydroxy-3-oxobutanoate + NADPH + H(+). The protein operates within amino-acid biosynthesis; L-isoleucine biosynthesis; L-isoleucine from 2-oxobutanoate: step 2/4. Its pathway is amino-acid biosynthesis; L-valine biosynthesis; L-valine from pyruvate: step 2/4. In terms of biological role, involved in the biosynthesis of branched-chain amino acids (BCAA). Catalyzes an alkyl-migration followed by a ketol-acid reduction of (S)-2-acetolactate (S2AL) to yield (R)-2,3-dihydroxy-isovalerate. In the isomerase reaction, S2AL is rearranged via a Mg-dependent methyl migration to produce 3-hydroxy-3-methyl-2-ketobutyrate (HMKB). In the reductase reaction, this 2-ketoacid undergoes a metal-dependent reduction by NADPH to yield (R)-2,3-dihydroxy-isovalerate. This chain is Ketol-acid reductoisomerase (NADP(+)), found in Buchnera aphidicola subsp. Schizaphis graminum (strain Sg).